We begin with the raw amino-acid sequence, 188 residues long: Elongation factor P (188 aa).

The protein belongs to the elongation factor P family.

It is found in the cytoplasm. It participates in protein biosynthesis; polypeptide chain elongation. Involved in peptide bond synthesis. Stimulates efficient translation and peptide-bond synthesis on native or reconstituted 70S ribosomes in vitro. Probably functions indirectly by altering the affinity of the ribosome for aminoacyl-tRNA, thus increasing their reactivity as acceptors for peptidyl transferase. This is Elongation factor P from Nitrosospira multiformis (strain ATCC 25196 / NCIMB 11849 / C 71).